A 53-amino-acid chain; its full sequence is ATP synthase protein 8 (53 aa).

A helical transmembrane segment spans residues 9–29 (WITSMLMFWISVSILFSTLWW).

The protein belongs to the ATPase protein 8 family. In terms of assembly, F-type ATPases have 2 components, CF(1) - the catalytic core - and CF(0) - the membrane proton channel.

Its subcellular location is the mitochondrion membrane. In terms of biological role, mitochondrial membrane ATP synthase (F(1)F(0) ATP synthase or Complex V) produces ATP from ADP in the presence of a proton gradient across the membrane which is generated by electron transport complexes of the respiratory chain. F-type ATPases consist of two structural domains, F(1) - containing the extramembraneous catalytic core and F(0) - containing the membrane proton channel, linked together by a central stalk and a peripheral stalk. During catalysis, ATP synthesis in the catalytic domain of F(1) is coupled via a rotary mechanism of the central stalk subunits to proton translocation. Part of the complex F(0) domain. Minor subunit located with subunit a in the membrane. This chain is ATP synthase protein 8 (MT-ATP8), found in Lumbricus terrestris (Common earthworm).